Consider the following 109-residue polypeptide: MQDNFTASSPSSSSSASGVAEDNLAARRRRLKFRANHRGTFETDILIGGFVEANADTMTAEELTDMENILEMPDPELTDWLFGRLPLPEEKATPMLRRMVEDSRIRRGG.

Residues 1–22 (MQDNFTASSPSSSSSASGVAED) form a disordered region. The segment covering 7–17 (ASSPSSSSSAS) has biased composition (low complexity).

The protein belongs to the SdhE FAD assembly factor family.

It is found in the cytoplasm. An FAD assembly protein, which accelerates covalent attachment of the cofactor into other proteins. Plays an essential role in the assembly of succinate dehydrogenase (SDH, respiratory complex II), an enzyme complex that is a component of both the tricarboxylic acid cycle and the electron transport chain, and which couples the oxidation of succinate to fumarate with the reduction of ubiquinone (coenzyme Q) to ubiquinol. Required for flavinylation of SdhA, when the SDH operon and this gene are overexpressed in G.oxydans. Flavinylation of SdhA is detected only in the presence of sdhE. The polypeptide is FAD assembly factor SdhE (Acetobacter pasteurianus (strain NBRC 105184 / IFO 3283-01)).